An 876-amino-acid chain; its full sequence is Alanine--tRNA ligase (876 aa).

The Zn(2+) site is built by His-566, His-570, Cys-668, and His-672.

It belongs to the class-II aminoacyl-tRNA synthetase family. Zn(2+) is required as a cofactor.

It is found in the cytoplasm. It catalyses the reaction tRNA(Ala) + L-alanine + ATP = L-alanyl-tRNA(Ala) + AMP + diphosphate. Its function is as follows. Catalyzes the attachment of alanine to tRNA(Ala) in a two-step reaction: alanine is first activated by ATP to form Ala-AMP and then transferred to the acceptor end of tRNA(Ala). Also edits incorrectly charged Ser-tRNA(Ala) and Gly-tRNA(Ala) via its editing domain. The chain is Alanine--tRNA ligase from Petrotoga mobilis (strain DSM 10674 / SJ95).